Here is a 670-residue protein sequence, read N- to C-terminus: DNA ligase (670 aa).

NAD(+)-binding positions include 34–38 (DAEYD), 84–85 (SL), 116–119 (EHKV), Arg-139, Glu-174, Tyr-226, Lys-291, and Lys-315. Residue Lys-118 is the N6-AMP-lysine intermediate of the active site. Zn(2+) contacts are provided by Cys-409, Cys-412, Cys-425, and Cys-430. The BRCT domain maps to 586–670 (EVSDLLSGLT…LKEKGAPVPA (85 aa)).

Belongs to the NAD-dependent DNA ligase family. LigA subfamily. Mg(2+) is required as a cofactor.

The enzyme catalyses NAD(+) + (deoxyribonucleotide)n-3'-hydroxyl + 5'-phospho-(deoxyribonucleotide)m = (deoxyribonucleotide)n+m + AMP + beta-nicotinamide D-nucleotide.. Its function is as follows. DNA ligase that catalyzes the formation of phosphodiester linkages between 5'-phosphoryl and 3'-hydroxyl groups in double-stranded DNA using NAD as a coenzyme and as the energy source for the reaction. It is essential for DNA replication and repair of damaged DNA. In Thermus filiformis, this protein is DNA ligase.